Here is a 246-residue protein sequence, read N- to C-terminus: 3-deoxy-manno-octulosonate cytidylyltransferase (246 aa).

The protein belongs to the KdsB family.

The protein resides in the cytoplasm. It catalyses the reaction 3-deoxy-alpha-D-manno-oct-2-ulosonate + CTP = CMP-3-deoxy-beta-D-manno-octulosonate + diphosphate. Its pathway is nucleotide-sugar biosynthesis; CMP-3-deoxy-D-manno-octulosonate biosynthesis; CMP-3-deoxy-D-manno-octulosonate from 3-deoxy-D-manno-octulosonate and CTP: step 1/1. It participates in bacterial outer membrane biogenesis; lipopolysaccharide biosynthesis. Functionally, activates KDO (a required 8-carbon sugar) for incorporation into bacterial lipopolysaccharide in Gram-negative bacteria. In Myxococcus xanthus (strain DK1622), this protein is 3-deoxy-manno-octulosonate cytidylyltransferase.